The primary structure comprises 473 residues: Protein AUXIN RESPONSE 4 (473 aa).

Acidic residues predominate over residues 1-10 (MAIITEEEED). A disordered region spans residues 1–38 (MAIITEEEEDPKTLNPPKNKPKDSDFTKSESTMKNPKP). Residues 29 to 38 (SESTMKNPKP) are compositionally biased toward polar residues. Residues 44-64 (FPFWFYFTVVVSLATIIFISL) form a helical membrane-spanning segment. An AB hydrolase-1 domain is found at 119-283 (TVVIVHGLGL…DSSISPALPL (165 aa)).

As to expression, most abundant in root tissue, lesser amounts in rosette leaves, stems and flowers and very little in mature siliques.

The protein resides in the endoplasmic reticulum membrane. Functionally, required for the auxin influx facilitator AUX1 polar trafficking and its asymmetric localization within the plasma membrane. Not involved in the PIN proteins localization. In Arabidopsis thaliana (Mouse-ear cress), this protein is Protein AUXIN RESPONSE 4 (AXR4).